Consider the following 170-residue polypeptide: Lipoprotein signal peptidase (170 aa).

The next 3 membrane-spanning stretches (helical) occupy residues 12 to 32, 67 to 87, and 93 to 113; these read WYWV…WVLA, WQRW…TVWL, and SLLK…GNLV. Active-site residues include aspartate 123 and aspartate 141. The chain crosses the membrane as a helical span at residues 137 to 157; it reads FNIADSAIFIGAVLIIWDSFF.

It belongs to the peptidase A8 family.

It is found in the cell inner membrane. It carries out the reaction Release of signal peptides from bacterial membrane prolipoproteins. Hydrolyzes -Xaa-Yaa-Zaa-|-(S,diacylglyceryl)Cys-, in which Xaa is hydrophobic (preferably Leu), and Yaa (Ala or Ser) and Zaa (Gly or Ala) have small, neutral side chains.. The protein operates within protein modification; lipoprotein biosynthesis (signal peptide cleavage). Functionally, this protein specifically catalyzes the removal of signal peptides from prolipoproteins. This chain is Lipoprotein signal peptidase, found in Shewanella oneidensis (strain ATCC 700550 / JCM 31522 / CIP 106686 / LMG 19005 / NCIMB 14063 / MR-1).